A 731-amino-acid polypeptide reads, in one-letter code: Autophagy-related protein 20 (731 aa).

Positions 1–22 (MSSVLRNQDNPPTISEVSSTTK) are enriched in polar residues. A disordered region spans residues 1 to 130 (MSSVLRNQDN…NNKSNNVSRV (130 aa)). Residues 31-41 (KQEEKEKEKEI) show a composition bias toward basic and acidic residues. Over residues 69–82 (SFMTANSFNEGPNT) the composition is skewed to polar residues. 2 stretches are compositionally biased toward low complexity: residues 92–102 (NNNSSSNNNRG) and 113–128 (LLLYNTSNNNKSNNVS). Positions 164 to 340 (IQITEAGNSN…KFLDPNANWG (177 aa)) constitute a PX domain. A 1,2-diacyl-sn-glycero-3-phospho-(1D-myo-inositol-3-phosphate)-binding residues include Arg205, Ser207, and Lys231. Residues 253–277 (SVAGSNGNSGGSGGGGASGGAGSGS) form a disordered region. Gly residues predominate over residues 259-277 (GNSGGSGGGGASGGAGSGS). Arg306 contacts a 1,2-diacyl-sn-glycero-3-phospho-(1D-myo-inositol-3-phosphate). The interval 586-626 (NSQVKPKNGKYNLEQQQSSTVSPAPPPGPPPSSSSSSSSSS) is disordered. Pro residues predominate over residues 608-617 (PAPPPGPPPS).

Belongs to the sorting nexin family.

The protein localises to the endosome membrane. The protein resides in the preautophagosomal structure membrane. Its function is as follows. Required for cytoplasm to vacuole transport (Cvt), pexophagy and mitophagy. Also involved in endoplasmic reticulum-specific autophagic process and is essential for the survival of cells subjected to severe ER stress. Functions in protein retrieval from the endocytic pathway. This chain is Autophagy-related protein 20 (ATG20), found in Candida albicans (strain SC5314 / ATCC MYA-2876) (Yeast).